A 319-amino-acid chain; its full sequence is 4-diphosphocytidyl-2-C-methyl-D-erythritol kinase (319 aa).

Residue Lys21 is part of the active site. 106 to 116 (PIGAGLAGGSS) lines the ATP pocket. Asp148 is an active-site residue.

Belongs to the GHMP kinase family. IspE subfamily.

The enzyme catalyses 4-CDP-2-C-methyl-D-erythritol + ATP = 4-CDP-2-C-methyl-D-erythritol 2-phosphate + ADP + H(+). It participates in isoprenoid biosynthesis; isopentenyl diphosphate biosynthesis via DXP pathway; isopentenyl diphosphate from 1-deoxy-D-xylulose 5-phosphate: step 3/6. Catalyzes the phosphorylation of the position 2 hydroxy group of 4-diphosphocytidyl-2C-methyl-D-erythritol. In Prochlorococcus marinus (strain MIT 9313), this protein is 4-diphosphocytidyl-2-C-methyl-D-erythritol kinase.